The sequence spans 261 residues: Pantothenate synthetase (261 aa).

29–36 (MGALHNGH) serves as a coordination point for ATP. Residue H36 is the Proton donor of the active site. Position 60 (Q60) interacts with (R)-pantoate. Q60 is a beta-alanine binding site. Residue 147–150 (GEKD) participates in ATP binding. (R)-pantoate is bound at residue Q153. 184 to 187 (LSSR) provides a ligand contact to ATP.

It belongs to the pantothenate synthetase family. Homodimer.

The protein localises to the cytoplasm. The enzyme catalyses (R)-pantoate + beta-alanine + ATP = (R)-pantothenate + AMP + diphosphate + H(+). Its pathway is cofactor biosynthesis; (R)-pantothenate biosynthesis; (R)-pantothenate from (R)-pantoate and beta-alanine: step 1/1. Functionally, catalyzes the condensation of pantoate with beta-alanine in an ATP-dependent reaction via a pantoyl-adenylate intermediate. This Francisella tularensis subsp. novicida (strain U112) protein is Pantothenate synthetase.